Here is a 467-residue protein sequence, read N- to C-terminus: Peroxisome proliferator-activated receptor alpha (467 aa).

A DNA-binding region (nuclear receptor) is located at residues 99 to 173; sequence NIECRICGDK…VGMSHNAIRF (75 aa). 2 NR C4-type zinc fingers span residues 102 to 122 and 139 to 161; these read CRICGDKASGYHYGVHACEGC and CDRSCKIQKKNRNKCQYCRFHKC. The region spanning 239 to 466 is the NR LBD domain; it reads FVIHDMETLC…PLLQEIYRDM (228 aa). The tract at residues 304-433 is required for heterodimerization with RXRA; sequence DQVTLLKYGV…PKLLQKLADL (130 aa).

The protein belongs to the nuclear hormone receptor family. NR1 subfamily. Heterodimer; with RXRA. This heterodimerization is required for DNA binding and transactivation activity. Interacts with NCOA3 coactivator. Interacts with CITED2; the interaction stimulates its transcriptional activity. Also interacts with PPARBP in vitro. Interacts with AKAP13, LPIN1, PRDM16 and coactivator NCOA6. Interacts with ASXL1 and ASXL2. Interacts with PER2. Interacts with SIRT1; the interaction seems to be modulated by NAD(+) levels. Interacts with CRY1 and CRY2. In hepatocytes, interacts with PAQR3 and HUWE1; the interactions promote PPARA poylubiquitination and HUWE1-mediated degradation. Ubiquitinated by E3 ubiquitin-protein ligase HUWE1; leading to proteasomal degradation. In terms of processing, phosphorylated.

The protein resides in the nucleus. Functionally, ligand-activated transcription factor. Key regulator of lipid metabolism. Activated by the endogenous ligand 1-palmitoyl-2-oleoyl-sn-glycerol-3-phosphocholine (16:0/18:1-GPC). Activated by oleylethanolamide, a naturally occurring lipid that regulates satiety. Receptor for peroxisome proliferators such as hypolipidemic drugs and fatty acids. Regulates the peroxisomal beta-oxidation pathway of fatty acids. Functions as a transcription activator for the ACOX1 and P450 genes. Transactivation activity requires heterodimerization with RXRA and is antagonized by NR2C2. May be required for the propagation of clock information to metabolic pathways regulated by PER2. The chain is Peroxisome proliferator-activated receptor alpha (PPARA) from Cavia porcellus (Guinea pig).